The following is a 450-amino-acid chain: uncharacterized protein (450 aa).

Over residues 387–416 the composition is skewed to basic and acidic residues; that stretch reads ELDEKNNNKEENKNQDLHEPKESSSEDLLK. The segment at 387-439 is disordered; the sequence is ELDEKNNNKEENKNQDLHEPKESSSEDLLKRLNNLKINTNEGPVQDNENHDNE.

This is an uncharacterized protein from Saccharomyces cerevisiae (strain ATCC 204508 / S288c) (Baker's yeast).